We begin with the raw amino-acid sequence, 159 residues long: Histone H2A (159 aa).

Residues 1-10 (MDSTGTGAGG) are compositionally biased toward gly residues. Disordered regions lie at residues 1-31 (MDSTGTGAGGKGKKGAAGRKVGGPRKKSVSR) and 133-159 (KTAEKASSGGSKEAKSPKKAAKSPKKA). 2 stretches are compositionally biased toward basic residues: residues 11–29 (KGKKGAAGRKVGGPRKKSV) and 149–159 (PKKAAKSPKKA). Short sequence motifs (SPKK motif) lie at residues 148–151 (SPKK) and 155–158 (SPKK).

Belongs to the histone H2A family. The nucleosome is a histone octamer containing two molecules each of H2A, H2B, H3 and H4 assembled in one H3-H4 heterotetramer and two H2A-H2B heterodimers. The octamer wraps approximately 147 bp of DNA.

The protein localises to the nucleus. It localises to the chromosome. In terms of biological role, core component of nucleosome. Nucleosomes wrap and compact DNA into chromatin, limiting DNA accessibility to the cellular machineries which require DNA as a template. Histones thereby play a central role in transcription regulation, DNA repair, DNA replication and chromosomal stability. DNA accessibility is regulated via a complex set of post-translational modifications of histones, also called histone code, and nucleosome remodeling. The polypeptide is Histone H2A (Zea mays (Maize)).